We begin with the raw amino-acid sequence, 1403 residues long: Centrosomal protein of 162 kDa (1403 aa).

The disordered stretch occupies residues 18–42 (KELSDDSFENSDKTARQSKKEMKKK). Residues Ser157 and Ser160 each carry the phosphoserine modification. A disordered region spans residues 170-231 (QANAELTDDE…EKISVPKQEE (62 aa)). Positions 208 to 231 (TKDEEMPSKENSKSEKISVPKQEE) are enriched in basic and acidic residues. Phosphoserine is present on residues Ser474 and Ser475. Residues 476–504 (EEEGAVMGKQVPYKKARSAPPLLKRKPQS) are disordered. Basic residues predominate over residues 487–502 (PYKKARSAPPLLKRKP). Coiled-coil stretches lie at residues 617–670 (KRVQ…QDNY), 698–1121 (VTGE…MLSN), 1171–1206 (EVLQ…QFEN), and 1235–1386 (CQNA…LHRQ).

The protein belongs to the CEP162 family. In terms of assembly, interacts with CEP290. Interacts with CPNE4. Interacts with alpha-tubulin.

The protein localises to the cytoplasm. It localises to the cytoskeleton. The protein resides in the microtubule organizing center. It is found in the centrosome. Its subcellular location is the centriole. The protein localises to the spindle. It localises to the nucleus. In terms of biological role, required to promote assembly of the transition zone in primary cilia. Acts by specifically recognizing and binding the axonemal microtubule. Localizes to the distal ends of centrioles before ciliogenesis and directly binds to axonemal microtubule, thereby promoting and restricting transition zone formation specifically at the cilia base. Required to mediate CEP290 association with microtubules. The protein is Centrosomal protein of 162 kDa (CEP162) of Homo sapiens (Human).